Reading from the N-terminus, the 539-residue chain is Probable 1,4-beta-D-glucan cellobiohydrolase B (539 aa).

The N-terminal stretch at 1-26 (MLPSTISYRIYKNALFFAALFGAVQA) is a signal peptide. The interval 27-461 (QKVGTSKAEV…SNIKVGPIGS (435 aa)) is catalytic. The N-linked (GlcNAc...) asparagine glycan is linked to Asn90. Residue Glu238 is the Nucleophile of the active site. The active-site Proton donor is the Glu243. 2 N-linked (GlcNAc...) asparagine glycosylation sites follow: Asn296 and Asn495. Positions 462–503 (TFNSGGSNPGGSTTTTKPATSTTTTKATTTATTNTTGPTGTG) are thr-rich linker. Over residues 462–503 (TFNSGGSNPGGSTTTTKPATSTTTTKATTTATTNTTGPTGTG) the composition is skewed to low complexity. The tract at residues 462-504 (TFNSGGSNPGGSTTTTKPATSTTTTKATTTATTNTTGPTGTGV) is disordered. The CBM1 domain occupies 503–539 (GVAQPWAQCGGIGYSGPTQCAAPYTCTKQNDYYSQCL). 2 cysteine pairs are disulfide-bonded: Cys511–Cys528 and Cys522–Cys538.

Belongs to the glycosyl hydrolase 7 (cellulase C) family.

It localises to the secreted. The enzyme catalyses Hydrolysis of (1-&gt;4)-beta-D-glucosidic linkages in cellulose and cellotetraose, releasing cellobiose from the non-reducing ends of the chains.. Functionally, the biological conversion of cellulose to glucose generally requires three types of hydrolytic enzymes: (1) Endoglucanases which cut internal beta-1,4-glucosidic bonds; (2) Exocellobiohydrolases that cut the disaccharide cellobiose from the non-reducing end of the cellulose polymer chain; (3) Beta-1,4-glucosidases which hydrolyze the cellobiose and other short cello-oligosaccharides to glucose. The polypeptide is Probable 1,4-beta-D-glucan cellobiohydrolase B (cbhB) (Aspergillus clavatus (strain ATCC 1007 / CBS 513.65 / DSM 816 / NCTC 3887 / NRRL 1 / QM 1276 / 107)).